Reading from the N-terminus, the 332-residue chain is L-lactate dehydrogenase A chain (332 aa).

The residue at position 2 (Ala2) is an N-acetylalanine. Lys5 is subject to N6-acetyllysine; alternate. An N6-succinyllysine; alternate modification is found at Lys5. Lys14 is subject to N6-acetyllysine. 29 to 57 (GAVGMACAISILMKDLADELALVDVMEDK) contributes to the NAD(+) binding site. Lys57 carries the N6-acetyllysine; alternate modification. A Glycyl lysine isopeptide (Lys-Gly) (interchain with G-Cter in SUMO2); alternate cross-link involves residue Lys57. Lys81 bears the N6-acetyllysine mark. Position 99 (Arg99) interacts with NAD(+). Substrate is bound at residue Arg106. An N6-acetyllysine; alternate modification is found at Lys118. N6-succinyllysine; alternate is present on Lys118. Lys126 carries the N6-acetyllysine modification. Residue Asn138 coordinates NAD(+). Substrate is bound by residues Asn138 and Arg169. Residue His193 is the Proton acceptor of the active site. Lys224 and Lys232 each carry N6-acetyllysine. At Tyr239 the chain carries Phosphotyrosine. Residue Lys243 is modified to N6-acetyllysine. A substrate-binding site is contributed by Thr248. Phosphothreonine is present on Thr309. Lys318 is modified (N6-acetyllysine; alternate). Lys318 bears the N6-succinyllysine; alternate mark. Phosphothreonine is present on Thr322.

It belongs to the LDH/MDH superfamily. LDH family. In terms of assembly, homotetramer. Interacts with PTEN upstream reading frame protein MP31. In terms of processing, ISGylated.

The protein resides in the cytoplasm. The catalysed reaction is (S)-lactate + NAD(+) = pyruvate + NADH + H(+). It functions in the pathway fermentation; pyruvate fermentation to lactate; (S)-lactate from pyruvate: step 1/1. Interconverts simultaneously and stereospecifically pyruvate and lactate with concomitant interconversion of NADH and NAD(+). The polypeptide is L-lactate dehydrogenase A chain (Ldha) (Mus musculus (Mouse)).